The primary structure comprises 216 residues: Cytochrome c oxidase assembly protein CtaG (216 aa).

Positions M1–P23 are enriched in low complexity. Positions M1 to R24 are disordered. At M1 to G26 the chain is on the cytoplasmic side. The helical; Signal-anchor for type II membrane protein transmembrane segment at R27–A49 threads the bilayer. The Periplasmic portion of the chain corresponds to V50–I216.

This sequence belongs to the COX11/CtaG family.

It is found in the cell inner membrane. In terms of biological role, exerts its effect at some terminal stage of cytochrome c oxidase synthesis, probably by being involved in the insertion of the copper B into subunit I. The protein is Cytochrome c oxidase assembly protein CtaG of Nitrobacter hamburgensis (strain DSM 10229 / NCIMB 13809 / X14).